Here is a 205-residue protein sequence, read N- to C-terminus: Beta-crystallin B2 (205 aa).

Residue alanine 2 is modified to N-acetylalanine. The interval 2–16 (ASDHQTQAGKPQSLN) is N-terminal arm. 2 consecutive Beta/gamma crystallin 'Greek key' domains span residues 17 to 56 (PKIIIFEQENFQGHSHELNGPCPNLKETGVEKAGSVLVQA) and 57 to 101 (GPWV…RPIK). Residues 102-106 (VDSQE) form a connecting peptide region. 2 Beta/gamma crystallin 'Greek key' domains span residues 107-148 (HKII…RVQS) and 149-191 (GTWV…RRIR). The tract at residues 193-205 (MQWHQRGAFHPSN) is C-terminal arm.

Belongs to the beta/gamma-crystallin family. As to quaternary structure, homo/heterodimer, or complexes of higher-order. The structure of beta-crystallin oligomers seems to be stabilized through interactions between the N-terminal arms.

Crystallins are the dominant structural components of the vertebrate eye lens. The chain is Beta-crystallin B2 (CRYBB2) from Homo sapiens (Human).